The following is a 471-amino-acid chain: Nuclear distribution protein PAC1 (471 aa).

One can recognise a LisH domain in the interval 9-41 (QAEELHKSMIAYLLSVNLSKSAAALREELADSV). Residues 60–87 (TSVVRLQKKIMDLESRNAALQQELDSAT) adopt a coiled-coil conformation. The segment covering 83-93 (LDSATPTSLSR) has biased composition (polar residues). The disordered stretch occupies residues 83–108 (LDSATPTSLSRRNQDPASWLPRAPAR). WD repeat units follow at residues 113–154 (SHRG…RTIK), 156–196 (HTRA…KNIR), 200–247 (GHDH…CVKT), 250–289 (GHLD…TKST), 292–352 (GHEH…IKTL), 354–393 (GHDN…KCVR), 398–428 (AHGH…INGQ), and 429–467 (GTPS…MNVR). The interval 424 to 449 (GINGQGTPSMNGVSISTTSKKEDTGG) is disordered. Residues 428 to 441 (QGTPSMNGVSISTT) show a composition bias toward polar residues.

The protein belongs to the WD repeat LIS1/nudF family. As to quaternary structure, self-associates. Interacts with NDL1 and dynein.

It localises to the cytoplasm. The protein localises to the cytoskeleton. It is found in the spindle pole. Positively regulates the activity of the minus-end directed microtubule motor protein dynein. May enhance dynein-mediated microtubule sliding by targeting dynein to the microtubule plus end. Required for nuclear migration during vegetative growth as well as development. Required for retrograde early endosome (EE) transport from the hyphal tip. Required for localization of dynein to the mitotic spindle poles. Recruits additional proteins to the dynein complex at SPBs. This is Nuclear distribution protein PAC1 from Coccidioides posadasii (strain C735) (Valley fever fungus).